Reading from the N-terminus, the 228-residue chain is uncharacterized protein (228 aa).

Positions 1-15 are cleaved as a signal peptide; it reads MKQKYLFIASMALAG. C16 carries the N-palmitoyl cysteine lipid modification. A lipid anchor (S-diacylglycerol cysteine) is attached at C16.

This sequence to P.multocida PM0015.

Its subcellular location is the cell membrane. This is an uncharacterized protein from Pasteurella multocida (strain Pm70).